Reading from the N-terminus, the 144-residue chain is AP-4 complex subunit sigma-1 (144 aa).

The protein belongs to the adaptor complexes small subunit family. Adaptor protein complex 4 (AP-4) is a heterotetramer composed of two large adaptins (epsilon-type subunit AP4E1 and beta-type subunit AP4B1), a medium adaptin (mu-type subunit AP4M1) and a small adaptin (sigma-type AP4S1).

It is found in the golgi apparatus. The protein localises to the trans-Golgi network membrane. In terms of biological role, component of the adaptor protein complex 4 (AP-4). Adaptor protein complexes are vesicle coat components involved both in vesicle formation and cargo selection. They control the vesicular transport of proteins in different trafficking pathways. AP-4 forms a non clathrin-associated coat on vesicles departing the trans-Golgi network (TGN) and may be involved in the targeting of proteins from the trans-Golgi network (TGN) to the endosomal-lysosomal system. It is also involved in protein sorting to the basolateral membrane in epithelial cells and the proper asymmetric localization of somatodendritic proteins in neurons. AP-4 is involved in the recognition and binding of tyrosine-based sorting signals found in the cytoplasmic part of cargos, but may also recognize other types of sorting signal. In Mus musculus (Mouse), this protein is AP-4 complex subunit sigma-1.